A 782-amino-acid chain; its full sequence is E3 UFM1-protein ligase 1 homolog (782 aa).

Residues Val-405–Lys-478 form a disordered region.

It belongs to the UFL1 family.

Its function is as follows. E3 UFM1-protein ligase that mediates ufmylation of target proteins. This chain is E3 UFM1-protein ligase 1 homolog, found in Drosophila simulans (Fruit fly).